Consider the following 94-residue polypeptide: Small ribosomal subunit protein uS19 (94 aa).

Residues 73–94 (EFSPTRRFGGHADKKSKKGQVK) form a disordered region.

The protein belongs to the universal ribosomal protein uS19 family.

In terms of biological role, protein S19 forms a complex with S13 that binds strongly to the 16S ribosomal RNA. This chain is Small ribosomal subunit protein uS19, found in Kosmotoga olearia (strain ATCC BAA-1733 / DSM 21960 / TBF 19.5.1).